The chain runs to 234 residues: Adenosine 5'-phosphosulfate reductase (234 aa).

[4Fe-4S] cluster is bound by residues Cys120, Cys121, Cys203, and Cys206. Catalysis depends on Cys229, which acts as the Nucleophile; cysteine thiosulfonate intermediate.

It belongs to the PAPS reductase family. CysH subfamily. [4Fe-4S] cluster is required as a cofactor.

It is found in the cytoplasm. The enzyme catalyses [thioredoxin]-disulfide + sulfite + AMP + 2 H(+) = adenosine 5'-phosphosulfate + [thioredoxin]-dithiol. The protein operates within sulfur metabolism; hydrogen sulfide biosynthesis; sulfite from sulfate. Catalyzes the formation of sulfite from adenosine 5'-phosphosulfate (APS) using thioredoxin as an electron donor. The sequence is that of Adenosine 5'-phosphosulfate reductase from Bacillus cereus (strain ATCC 14579 / DSM 31 / CCUG 7414 / JCM 2152 / NBRC 15305 / NCIMB 9373 / NCTC 2599 / NRRL B-3711).